We begin with the raw amino-acid sequence, 627 residues long: DNA mismatch repair protein MutL (627 aa).

Basic and acidic residues predominate over residues 354–364 (DEKPPEKKVPE). Positions 354–374 (DEKPPEKKVPEKSTAPSYSPM) are disordered.

The protein belongs to the DNA mismatch repair MutL/HexB family.

Functionally, this protein is involved in the repair of mismatches in DNA. It is required for dam-dependent methyl-directed DNA mismatch repair. May act as a 'molecular matchmaker', a protein that promotes the formation of a stable complex between two or more DNA-binding proteins in an ATP-dependent manner without itself being part of a final effector complex. Overexpression of mutSL partially suppresses the high spontaneous mutation frequency of a ytkD/mutM/mutY triple disruption which lacks the system required to prevent damage by oxidized guanine (8-oxo-dGTP). This suggests that MutSL also functions to repair mismatches due to oxidative stress in both growing and stationary phase cells. In Bacillus subtilis (strain 168), this protein is DNA mismatch repair protein MutL.